The sequence spans 472 residues: Ribosomal protein uS12 methylthiotransferase RimO (472 aa).

Residues 33 to 143 (NRIGFVSLGC…VLKHVHKYVP (111 aa)) enclose the MTTase N-terminal domain. [4Fe-4S] cluster is bound by residues Cys42, Cys78, Cys107, Cys175, Cys179, and Cys182. In terms of domain architecture, Radical SAM core spans 161–398 (LTPKHYAYLK…MEVQAEISAE (238 aa)). Positions 401–467 (ARFVGRTLDI…EHDLWAEVVD (67 aa)) constitute a TRAM domain.

It belongs to the methylthiotransferase family. RimO subfamily. [4Fe-4S] cluster serves as cofactor.

The protein resides in the cytoplasm. The enzyme catalyses L-aspartate(89)-[ribosomal protein uS12]-hydrogen + (sulfur carrier)-SH + AH2 + 2 S-adenosyl-L-methionine = 3-methylsulfanyl-L-aspartate(89)-[ribosomal protein uS12]-hydrogen + (sulfur carrier)-H + 5'-deoxyadenosine + L-methionine + A + S-adenosyl-L-homocysteine + 2 H(+). Its function is as follows. Catalyzes the methylthiolation of an aspartic acid residue of ribosomal protein uS12. In Shewanella baltica (strain OS155 / ATCC BAA-1091), this protein is Ribosomal protein uS12 methylthiotransferase RimO.